The following is a 468-amino-acid chain: Putative chitinase 1 (468 aa).

The first 21 residues, 1–21 (MDFYSSLLPFLILIYLEFCSG), serve as a signal peptide directing secretion. Residues 22 to 381 (FNRVCYYNGW…MSIIHGLGEY (360 aa)) enclose the GH18 domain. A disulfide bridge connects residues cysteine 26 and cysteine 51. Chitin-binding positions include 73–74 (VF) and 100–103 (GGWD). The active-site Proton donor is the glutamate 143. Residues tyrosine 144, 213 to 216 (KMYD), and tryptophan 353 each bind chitin. Residues 386–440 (SDTLEAEREMINKKIRKAAREISYYSDKGNSTMAKKMEDKLNQLKDHLSAVQAHQ) are a coiled coil.

This sequence belongs to the glycosyl hydrolase 18 family. As to expression, prismatic layer of shell (at protein level). Expressed primarily in the mantle with highest level in the outer epithelium of the mantle edge and lower level in the mantle pallium.

It is found in the secreted. The catalysed reaction is Random endo-hydrolysis of N-acetyl-beta-D-glucosaminide (1-&gt;4)-beta-linkages in chitin and chitodextrins.. The chain is Putative chitinase 1 from Margaritifera margaritifera (Freshwater pearl mussel).